The following is a 71-amino-acid chain: Large ribosomal subunit protein uL29 (71 aa).

This sequence belongs to the universal ribosomal protein uL29 family.

This Synechococcus sp. (strain RCC307) protein is Large ribosomal subunit protein uL29.